Consider the following 40-residue polypeptide: Conotoxin Bt14.16 (40 aa).

Residues S1–R18 constitute a propeptide that is removed on maturation. Cystine bridges form between C21–C36 and C24–C29.

The protein belongs to the conotoxin A superfamily. In terms of tissue distribution, expressed by the venom duct.

Its subcellular location is the secreted. Probable neurotoxin with unknown target. Possibly targets ion channels. The sequence is that of Conotoxin Bt14.16 from Conus betulinus (Beech cone).